A 505-amino-acid polypeptide reads, in one-letter code: Activin receptor type-1B (505 aa).

The N-terminal stretch at M1–G23 is a signal peptide. The Extracellular portion of the chain corresponds to S24–E126. A glycan (N-linked (GlcNAc...) asparagine) is linked at N43. The chain crosses the membrane as a helical span at residues L127 to I149. The Cytoplasmic segment spans residues N150 to I505. Positions K177–T206 constitute a GS domain. In terms of domain architecture, Protein kinase spans I207–L497. ATP-binding positions include I213–V221 and K234. The active-site Proton acceptor is the D335. Y380 is modified (phosphotyrosine).

Belongs to the protein kinase superfamily. TKL Ser/Thr protein kinase family. TGFB receptor subfamily. In terms of assembly, forms an activin receptor complex with activin receptor type-2 (ACVR2A or ACVR2B). Part of a complex consisting of MAGI2/ARIP1, ACVR2A, ACVR1B and SMAD3. Interacts with SMAD2 and SMAD3. Interacts with SMAD7. Interacts with FKBP1A. Interacts with IGSF1. Interacts with CRIPTO. Interacts with TDP2. Interacts with TSC22D1/TSC-22. The cofactor is Mg(2+). Requires Mn(2+) as cofactor. Post-translationally, autophosphorylated. Phosphorylated by activin receptor type-2 (ACVR2A or ACVR2B) in response to activin-binding at serine and threonine residues in the GS domain. Phosphorylation of ACVR1B by activin receptor type-2 regulates association with SMAD7. Ubiquitinated. Level of ubiquitination is regulated by the SMAD7-SMURF1 complex. In terms of processing, ubiquitinated. Urogenital ridge, testis, ovary, brain and lungs.

The protein resides in the cell membrane. The catalysed reaction is L-threonyl-[receptor-protein] + ATP = O-phospho-L-threonyl-[receptor-protein] + ADP + H(+). The enzyme catalyses L-seryl-[receptor-protein] + ATP = O-phospho-L-seryl-[receptor-protein] + ADP + H(+). With respect to regulation, activin receptor type-2 (ACVR2A or ACVR2B) activates the type-1 receptor through phosphorylation of its regulatory GS domain. Functionally, transmembrane serine/threonine kinase activin type-1 receptor forming an activin receptor complex with activin receptor type-2 (ACVR2A or ACVR2B). Transduces the activin signal from the cell surface to the cytoplasm and is thus regulating a many physiological and pathological processes including neuronal differentiation and neuronal survival, hair follicle development and cycling, FSH production by the pituitary gland, wound healing, extracellular matrix production, immunosuppression and carcinogenesis. Activin is also thought to have a paracrine or autocrine role in follicular development in the ovary. Within the receptor complex, type-2 receptors (ACVR2A and/or ACVR2B) act as a primary activin receptors whereas the type-1 receptors like ACVR1B act as downstream transducers of activin signals. Activin binds to type-2 receptor at the plasma membrane and activates its serine-threonine kinase. The activated receptor type-2 then phosphorylates and activates the type-1 receptor such as ACVR1B. Once activated, the type-1 receptor binds and phosphorylates the SMAD proteins SMAD2 and SMAD3, on serine residues of the C-terminal tail. Soon after their association with the activin receptor and subsequent phosphorylation, SMAD2 and SMAD3 are released into the cytoplasm where they interact with the common partner SMAD4. This SMAD complex translocates into the nucleus where it mediates activin-induced transcription. Inhibitory SMAD7, which is recruited to ACVR1B through FKBP1A, can prevent the association of SMAD2 and SMAD3 with the activin receptor complex, thereby blocking the activin signal. Activin signal transduction is also antagonized by the binding to the receptor of inhibin-B via the IGSF1 inhibin coreceptor. ACVR1B also phosphorylates TDP2. This is Activin receptor type-1B (Acvr1b) from Rattus norvegicus (Rat).